The following is a 438-amino-acid chain: GDP-mannose 6-dehydrogenase (438 aa).

Residues Tyr10, Val11, Asp30, Lys35, Thr86, and Thr124 each coordinate NAD(+). Residues Glu161, Lys210, Asn214, His217, Asn225, Tyr256, Tyr257, Arg259, Phe262, and Gly265 each contribute to the GDP-alpha-D-mannuronate site. Cys268 is a catalytic residue. Lys271 is an NAD(+) binding site. Residue Lys324 coordinates GDP-alpha-D-mannuronate. Arg331 provides a ligand contact to NAD(+).

Belongs to the UDP-glucose/GDP-mannose dehydrogenase family.

It carries out the reaction GDP-alpha-D-mannose + 2 NAD(+) + H2O = GDP-alpha-D-mannuronate + 2 NADH + 3 H(+). The protein operates within glycan biosynthesis; alginate biosynthesis. Functionally, catalyzes the oxidation of guanosine diphospho-D-mannose (GDP-D-mannose) to GDP-D-mannuronic acid, a precursor for alginate polymerization. The alginate layer causes a mucoid phenotype and provides a protective barrier against host immune defenses and antibiotics. The chain is GDP-mannose 6-dehydrogenase (algD) from Pseudomonas putida (strain ATCC 47054 / DSM 6125 / CFBP 8728 / NCIMB 11950 / KT2440).